A 505-amino-acid chain; its full sequence is Metalloprotease TIKI1 (505 aa).

A signal peptide spans 1 to 19 (MSPWSWFLLQTLCLLPTGA). At 20-477 (ASRRGAPGTA…RRGHSHHSQM (458 aa)) the chain is on the extracellular side. Asparagine 220, asparagine 229, asparagine 278, and asparagine 336 each carry an N-linked (GlcNAc...) asparagine glycan. Residues 389–428 (PEAVSSGHSTLPPLVSRPGSADTPSEAEQRFRKKRRRSQR) are disordered. Residues 419–428 (FRKKRRRSQR) show a composition bias toward basic residues. The helical transmembrane segment at 478–498 (VASSACLSLWTPVFWVLVLAF) threads the bilayer. Topologically, residues 499–505 (QTETPLL) are cytoplasmic.

Belongs to the TIKI family. Mn(2+) is required as a cofactor. It depends on Co(2+) as a cofactor.

The protein resides in the cell membrane. Its function is as follows. Metalloprotease that acts as a negative regulator of the Wnt signaling pathway by mediating the cleavage of the 8 N-terminal residues of a subset of Wnt proteins. Following cleavage, Wnt proteins become oxidized and form large disulfide-bond oligomers, leading to their inactivation. Able to cleave WNT3A, WNT5, but not WNT11. Required for head formation. In Homo sapiens (Human), this protein is Metalloprotease TIKI1 (TRABD2A).